The sequence spans 252 residues: 2-succinyl-6-hydroxy-2,4-cyclohexadiene-1-carboxylate synthase (252 aa).

Belongs to the AB hydrolase superfamily. MenH family. Monomer.

The enzyme catalyses 5-enolpyruvoyl-6-hydroxy-2-succinyl-cyclohex-3-ene-1-carboxylate = (1R,6R)-6-hydroxy-2-succinyl-cyclohexa-2,4-diene-1-carboxylate + pyruvate. Its pathway is quinol/quinone metabolism; 1,4-dihydroxy-2-naphthoate biosynthesis; 1,4-dihydroxy-2-naphthoate from chorismate: step 3/7. It functions in the pathway quinol/quinone metabolism; menaquinone biosynthesis. In terms of biological role, catalyzes a proton abstraction reaction that results in 2,5-elimination of pyruvate from 2-succinyl-5-enolpyruvyl-6-hydroxy-3-cyclohexene-1-carboxylate (SEPHCHC) and the formation of 2-succinyl-6-hydroxy-2,4-cyclohexadiene-1-carboxylate (SHCHC). This is 2-succinyl-6-hydroxy-2,4-cyclohexadiene-1-carboxylate synthase from Salmonella paratyphi A (strain ATCC 9150 / SARB42).